The sequence spans 705 residues: tRNA 5-methylaminomethyl-2-thiouridine biosynthesis bifunctional protein MnmC (705 aa).

The tRNA (mnm(5)s(2)U34)-methyltransferase stretch occupies residues 1–241; it reads MTIKTADIQF…KREMLAGIIA (241 aa). The interval 289–705 is FAD-dependent cmnm(5)s(2)U34 oxidoreductase; the sequence is IGAGIAGASM…LIRQLIRREV (417 aa).

The protein in the N-terminal section; belongs to the methyltransferase superfamily. tRNA (mnm(5)s(2)U34)-methyltransferase family. In the C-terminal section; belongs to the DAO family. FAD is required as a cofactor.

Its subcellular location is the cytoplasm. The enzyme catalyses 5-aminomethyl-2-thiouridine(34) in tRNA + S-adenosyl-L-methionine = 5-methylaminomethyl-2-thiouridine(34) in tRNA + S-adenosyl-L-homocysteine + H(+). In terms of biological role, catalyzes the last two steps in the biosynthesis of 5-methylaminomethyl-2-thiouridine (mnm(5)s(2)U) at the wobble position (U34) in tRNA. Catalyzes the FAD-dependent demodification of cmnm(5)s(2)U34 to nm(5)s(2)U34, followed by the transfer of a methyl group from S-adenosyl-L-methionine to nm(5)s(2)U34, to form mnm(5)s(2)U34. The protein is tRNA 5-methylaminomethyl-2-thiouridine biosynthesis bifunctional protein MnmC of Pseudoalteromonas atlantica (strain T6c / ATCC BAA-1087).